The chain runs to 113 residues: Ranasmurfin (113 aa).

Tyr-2 is subject to 2',4',5'-topaquinone. The lysine tyrosylquinone (Tyr-Lys) cross-link spans 2-31; sequence YACSFPPSEIPGSKECLAEALQKHQGFKKK. Intrachain disulfides connect Cys-4-Cys-62, Cys-17-Cys-65, and Cys-37-Cys-101. Position 9 is an aminomalonic acid (Ser); in chain B (Ser-9). The S-cysteinyl 3-(oxidosulfanyl)alanine (Cys-Cys); in chain B cross-link spans 17-65; the sequence is CLAEALQKHQGFKKKSYALICAYLNYKEDAENYERAAEDFDSAVKCTGC. The segment at residues 30–108 is a cross-link (lysine tyrosylquinone (Lys-Tyr)); sequence KKSYALICAY…SLCTLFQKLY (79 aa). Residue Cys-65 is modified to Cysteine sulfenic acid (-SOH); in chain B. Tyr-108 is modified (2',4',5'-topaquinone). 2 residues coordinate Zn(2+): Tyr-108 and His-112. Tyr-108 is covalently cross-linked (5'-tyrosyl-5'-aminotyrosine (Tyr-Tyr) (interchain with Y-108)).

As to quaternary structure, homodimer. The two chains, designated A and B, differ in their modifications, but not, it is thought, in their sequence. Requires Zn(2+) as cofactor. Foam nest.

It is found in the secreted. This is Ranasmurfin from Polypedates leucomystax (Common tree frog).